We begin with the raw amino-acid sequence, 282 residues long: Succinate dehydrogenase [ubiquinone] iron-sulfur subunit, mitochondrial (282 aa).

In terms of domain architecture, 2Fe-2S ferredoxin-type spans Y43–M131. Positions 91, 96, 99, and 111 each coordinate [2Fe-2S] cluster. In terms of domain architecture, 4Fe-4S ferredoxin-type spans E174–Y204. [4Fe-4S] cluster-binding residues include C184, C187, and C190. C194 contacts [3Fe-4S] cluster. W199 is a binding site for a ubiquinone. Residues C241 and C247 each coordinate [3Fe-4S] cluster. Residue C251 participates in [4Fe-4S] cluster binding.

It belongs to the succinate dehydrogenase/fumarate reductase iron-sulfur protein family. In terms of assembly, component of complex II composed of four subunits: a flavoprotein (FP), an iron-sulfur protein (IP), and a cytochrome b composed of a large and a small subunit. [2Fe-2S] cluster serves as cofactor. [3Fe-4S] cluster is required as a cofactor. It depends on [4Fe-4S] cluster as a cofactor.

The protein localises to the mitochondrion inner membrane. The enzyme catalyses a quinone + succinate = fumarate + a quinol. It functions in the pathway carbohydrate metabolism; tricarboxylic acid cycle; fumarate from succinate (eukaryal route): step 1/1. Functionally, iron-sulfur protein (IP) subunit of succinate dehydrogenase (SDH) that is involved in complex II of the mitochondrial electron transport chain and is responsible for transferring electrons from succinate to ubiquinone (coenzyme Q). This chain is Succinate dehydrogenase [ubiquinone] iron-sulfur subunit, mitochondrial, found in Caenorhabditis briggsae.